Reading from the N-terminus, the 94-residue chain is Protein RnfH (94 aa).

Belongs to the UPF0125 (RnfH) family.

The protein is Protein RnfH of Sodalis glossinidius (strain morsitans).